Reading from the N-terminus, the 329-residue chain is (+)-eremophilene synthase (329 aa).

Mg(2+) contacts are provided by Asp91 and Glu96. The DDXXD motif motif lies at 91 to 95; the sequence is DDAYD. Residue Arg185 coordinates substrate. Mg(2+)-binding residues include Asn231 and Ser235. Lys238 contacts substrate. Glu239 serves as a coordination point for Mg(2+). 317–318 is a binding site for substrate; the sequence is RY.

Belongs to the terpene synthase family. Mg(2+) is required as a cofactor.

The enzyme catalyses (2E,6E)-farnesyl diphosphate = (+)-eremophilene + diphosphate. It functions in the pathway secondary metabolite biosynthesis; terpenoid biosynthesis. Its function is as follows. Catalyzes the conversion of (2E,6E)-farnesyl diphosphate (FPP) to yield the bicyclic sesquiterpene eremophilene via a 1,10-cyclization, which requires the abstraction of the pyrophosphate from FPP to yield the (E,E)-germacradienyl cation. The only accepted substrate is farnesyl diphosphate (FPP). In Sorangium cellulosum (strain So ce56) (Polyangium cellulosum (strain So ce56)), this protein is (+)-eremophilene synthase.